A 149-amino-acid chain; its full sequence is Transcriptional repressor NrdR (149 aa).

A zinc finger spans residues 3-34 (CPFCDTEETKVIDSRLVSDGYQVRRRRECGHC). The region spanning 49–139 (PKIIKTDGTR…VYLSFDDIDQ (91 aa)) is the ATP-cone domain.

It belongs to the NrdR family. Zn(2+) is required as a cofactor.

Negatively regulates transcription of bacterial ribonucleotide reductase nrd genes and operons by binding to NrdR-boxes. This chain is Transcriptional repressor NrdR, found in Haemophilus influenzae (strain PittEE).